The sequence spans 1164 residues: DNA-directed RNA polymerase subunit beta (1164 aa).

The protein belongs to the RNA polymerase beta chain family. As to quaternary structure, the RNAP catalytic core consists of 2 alpha, 1 beta, 1 beta' and 1 omega subunit. When a sigma factor is associated with the core the holoenzyme is formed, which can initiate transcription.

It carries out the reaction RNA(n) + a ribonucleoside 5'-triphosphate = RNA(n+1) + diphosphate. DNA-dependent RNA polymerase catalyzes the transcription of DNA into RNA using the four ribonucleoside triphosphates as substrates. The chain is DNA-directed RNA polymerase subunit beta from Saccharopolyspora erythraea (strain ATCC 11635 / DSM 40517 / JCM 4748 / NBRC 13426 / NCIMB 8594 / NRRL 2338).